A 147-amino-acid chain; its full sequence is MAPSGPTPYSHRPQIKHYGTFSDCMRYTLNDESKVDDRCSDIHNSLAQSNVTSSMSVMNDSEECPLINGPSMQAEDPKSVFYKVRKPDRSRDFSWQNLNSHGNSGLRREKYIRSSKRRWKNPEIFKVSLKCESIGAGNGIKISFSFF.

The interval 51–72 is disordered; it reads VTSSMSVMNDSEECPLINGPSM.

This is an uncharacterized protein from Gallid herpesvirus 2 (strain GA) (GaHV-2).